We begin with the raw amino-acid sequence, 358 residues long: Nitric oxide synthase oxygenase (358 aa).

Heme is bound at residue cysteine 62.

The protein belongs to the NOS family. Bacterial NOS oxygenase subfamily. In terms of assembly, homodimer. Requires heme as cofactor. It depends on (6S)-5,6,7,8-tetrahydrofolate as a cofactor.

The catalysed reaction is 3 reduced [flavodoxin] + 2 L-arginine + 4 O2 = 3 oxidized [flavodoxin] + 2 L-citrulline + 2 nitric oxide + 4 H2O + 5 H(+). In terms of biological role, catalyzes the production of nitric oxide. The polypeptide is Nitric oxide synthase oxygenase (nos) (Staphylococcus aureus (strain COL)).